The sequence spans 278 residues: S-formylglutathione hydrolase YeiG (278 aa).

Residues serine 145, aspartate 223, and histidine 256 each act as charge relay system in the active site.

This sequence belongs to the esterase D family.

It catalyses the reaction S-formylglutathione + H2O = formate + glutathione + H(+). Its function is as follows. Serine hydrolase involved in the detoxification of formaldehyde. Hydrolyzes S-formylglutathione to glutathione and formate. This is S-formylglutathione hydrolase YeiG (yeiG) from Shigella flexneri serotype 5b (strain 8401).